Consider the following 187-residue polypeptide: Ribosome-recycling factor (187 aa).

Belongs to the RRF family.

Its subcellular location is the cytoplasm. In terms of biological role, responsible for the release of ribosomes from messenger RNA at the termination of protein biosynthesis. May increase the efficiency of translation by recycling ribosomes from one round of translation to another. The polypeptide is Ribosome-recycling factor (Parvibaculum lavamentivorans (strain DS-1 / DSM 13023 / NCIMB 13966)).